A 265-amino-acid chain; its full sequence is Dehydrogenase RED2 (265 aa).

Residues 6-26 traverse the membrane as a helical segment; the sequence is SFLLSKLFLCIALCTAYVAFS. An N-linked (GlcNAc...) asparagine glycan is attached at asparagine 45. The helical transmembrane segment at 47–67 threads the bilayer; it reads TSTVFGLTIVAIGLSALSSWL. Asparagine 74 is a glycosylation site (N-linked (GlcNAc...) asparagine). Valine 89 contributes to the NADP(+) binding site. N-linked (GlcNAc...) asparagine glycosylation is present at asparagine 127. Aspartate 136 and asparagine 163 together coordinate NADP(+). Residue asparagine 176 is glycosylated (N-linked (GlcNAc...) asparagine). Residue serine 216 is the Proton donor of the active site. Residues tyrosine 228 and lysine 232 each coordinate NADP(+). The active-site Proton acceptor is the tyrosine 228. The active-site Lowers pKa of active site Tyr is lysine 232.

The protein belongs to the short-chain dehydrogenases/reductases (SDR) family.

It localises to the membrane. The enzyme catalyses a primary alcohol + NAD(+) = an aldehyde + NADH + H(+). The catalysed reaction is a secondary alcohol + NAD(+) = a ketone + NADH + H(+). It functions in the pathway mycotoxin biosynthesis. Its function is as follows. Dehydrogenase; part of the Tox1B locus, one of the 2 loci that mediate the biosynthesis of T-toxin, a family of linear polyketides 37 to 45 carbons in length, of which the major component is 41 carbons, and which leads to high virulence to maize. One of the PKSs (PKS1 or PKS2) could synthesize a precursor, used subsequently by the other PKS as starter unit, to add additional carbons. Variability in the length of the final carbon backbone C35-47 could be achieved by varying the number of condensation cycles, or use of different starter or extender units or might be due to decarboxylation of the penultimate product, catalyzed by DEC1. Additional proteins are required for the biosynthesis of T-toxin, including oxidoreductases RED1, RED2, RED3, LAM1 and OXI1, as well as esterase TOX9. The polypeptide is Dehydrogenase RED2 (Cochliobolus heterostrophus (strain C4 / ATCC 48331 / race T) (Southern corn leaf blight fungus)).